The following is a 528-amino-acid chain: D-3-phosphoglycerate dehydrogenase (528 aa).

Residues R151 to I152, D171, A230 to R232, and D256 contribute to the NAD(+) site. R232 is a catalytic residue. E261 is a catalytic residue. H279 acts as the Proton donor in catalysis. H279–A282 lines the NAD(+) pocket. The region spanning N455–S528 is the ACT domain.

It belongs to the D-isomer specific 2-hydroxyacid dehydrogenase family.

The enzyme catalyses (2R)-3-phosphoglycerate + NAD(+) = 3-phosphooxypyruvate + NADH + H(+). It catalyses the reaction (R)-2-hydroxyglutarate + NAD(+) = 2-oxoglutarate + NADH + H(+). The protein operates within amino-acid biosynthesis; L-serine biosynthesis; L-serine from 3-phospho-D-glycerate: step 1/3. In terms of biological role, catalyzes the reversible oxidation of 3-phospho-D-glycerate to 3-phosphonooxypyruvate, the first step of the phosphorylated L-serine biosynthesis pathway. Also catalyzes the reversible oxidation of 2-hydroxyglutarate to 2-oxoglutarate. In Mycobacterium leprae (strain TN), this protein is D-3-phosphoglycerate dehydrogenase (serA).